Consider the following 104-residue polypeptide: MSEFSNVTVIKKANIYFEGKVASHTVLFPDGTKKTLGIMQAGDYEFSTANAEVMEILSGTLEWQMKGECCWKTIGAGESFQIPADSVFLMKVPAVADYCCSYIQ.

This sequence belongs to the nucleoside phosphorylase PpnP family.

It carries out the reaction a purine D-ribonucleoside + phosphate = a purine nucleobase + alpha-D-ribose 1-phosphate. It catalyses the reaction adenosine + phosphate = alpha-D-ribose 1-phosphate + adenine. The catalysed reaction is cytidine + phosphate = cytosine + alpha-D-ribose 1-phosphate. The enzyme catalyses guanosine + phosphate = alpha-D-ribose 1-phosphate + guanine. It carries out the reaction inosine + phosphate = alpha-D-ribose 1-phosphate + hypoxanthine. It catalyses the reaction thymidine + phosphate = 2-deoxy-alpha-D-ribose 1-phosphate + thymine. The catalysed reaction is uridine + phosphate = alpha-D-ribose 1-phosphate + uracil. The enzyme catalyses xanthosine + phosphate = alpha-D-ribose 1-phosphate + xanthine. In terms of biological role, catalyzes the phosphorolysis of diverse nucleosides, yielding D-ribose 1-phosphate and the respective free bases. Can use uridine, adenosine, guanosine, cytidine, thymidine, inosine and xanthosine as substrates. Also catalyzes the reverse reactions. The polypeptide is Pyrimidine/purine nucleoside phosphorylase (Pelobacter propionicus (strain DSM 2379 / NBRC 103807 / OttBd1)).